The primary structure comprises 278 residues: 1-acyl-sn-glycerol-3-phosphate acyltransferase beta (278 aa).

The N-terminal stretch at 1–23 (MDPWPWLTAALLLLLLLVQLSRT) is a signal peptide. Over 24–29 (ARFYAK) the chain is Lumenal. A helical transmembrane segment spans residues 30–50 (VGLYCVLCLSFSAAASIVCLL). Over 51-121 (RHGGRTVDNM…PKRCVQIAKR (71 aa)) the chain is Cytoplasmic. The HXXXXD motif motif lies at 98-103 (HQSILD). A helical transmembrane segment spans residues 122-142 (ELMFTGPVGLIMYLGGVYFIN). Over 143-278 (RQQARTAMSV…IKEPGVLPAQ (136 aa)) the chain is Lumenal. The EGTR motif signature appears at 172-175 (EGTR).

It belongs to the 1-acyl-sn-glycerol-3-phosphate acyltransferase family. In terms of tissue distribution, expressed at high levels in the liver, at intermediate levels in the kidney, gut, heart and skeletal muscles. Undetectable in brain and spleen.

It localises to the endoplasmic reticulum membrane. It catalyses the reaction a 1-acyl-sn-glycero-3-phosphate + an acyl-CoA = a 1,2-diacyl-sn-glycero-3-phosphate + CoA. The catalysed reaction is 1-(9Z-octadecenoyl)-sn-glycero-3-phosphate + (9Z)-octadecenoyl-CoA = 1,2-di-(9Z-octadecenoyl)-sn-glycero-3-phosphate + CoA. It carries out the reaction 1-(9Z-octadecenoyl)-sn-glycero-3-phosphate + hexadecanoyl-CoA = 1-(9Z)-octadecenoyl-2-hexadecanoyl-sn-glycero-3-phosphate + CoA. The enzyme catalyses heptadecanoyl-CoA + 1-(9Z-octadecenoyl)-sn-glycero-3-phosphate = 1-(9Z)-octadecenoyl-2-heptadecanoyl-sn-glycero-3-phosphate + CoA. It catalyses the reaction 1-(9Z-octadecenoyl)-sn-glycero-3-phosphate + (9Z,12Z)-octadecadienoyl-CoA = 1-(9Z)-octadecenoyl-2-(9Z,12Z)-octadecadienoyl-sn-glycero-3-phosphate + CoA. The catalysed reaction is 1-(9Z-octadecenoyl)-sn-glycero-3-phosphate + tetradecanoyl-CoA = 1-(9Z)-octadecenoyl-2-tetradecanoyl-sn-glycero-3-phosphate + CoA. It carries out the reaction pentadecanoyl-CoA + 1-(9Z-octadecenoyl)-sn-glycero-3-phosphate = 1-(9Z)-octadecenoyl-2-pentadecanoyl-sn-glycero-3-phosphate + CoA. The enzyme catalyses 1-hexadecanoyl-sn-glycero-3-phosphate + (9Z)-octadecenoyl-CoA = 1-hexadecanoyl-2-(9Z-octadecenoyl)-sn-glycero-3-phosphate + CoA. It catalyses the reaction 1-tetradecanoyl-sn-glycerol 3-phosphate + (9Z)-octadecenoyl-CoA = 1-tetradecanoyl-2-(9Z)-octadecenoyl-sn-glycero-3-phosphate + CoA. The catalysed reaction is 1-(9Z,12Z,15Z)-octadecatrienoyl-sn-glycero-3-phosphate + (9Z)-octadecenoyl-CoA = 1-(9Z,12Z,15Z)-octadecatrienoyl-2-(9Z)-octadecenoyl-sn-glycero-3-phosphate + CoA. It carries out the reaction 1-(6Z,9Z,12Z-octadecatrienoyl)-sn-glycero-3-phosphate + (9Z)-octadecenoyl-CoA = (6Z,9Z,12Z)-octadecatrienoyl-2-(9Z)-octadecenoyl-sn-glycero-3-phosphate + CoA. The enzyme catalyses 1-eicosanoyl-sn-glycero-3-phosphate + (9Z)-octadecenoyl-CoA = 1-eicosanoyl-2-(9Z)-octadecenoyl-sn-glycero-3-phosphate + CoA. It catalyses the reaction 1-hexadecanoyl-sn-glycero-3-phosphate + octadecanoyl-CoA = 1-hexadecanoyl-2-octadecanoyl-sn-glycero-3-phosphate + CoA. The catalysed reaction is 1-hexadecanoyl-sn-glycero-3-phosphate + (5Z,8Z,11Z,14Z)-eicosatetraenoyl-CoA = 1-hexadecanoyl-2-(5Z,8Z,11Z,14Z-eicosatetraenoyl)-sn-glycero-3-phosphate + CoA. It carries out the reaction 1-hexadecanoyl-sn-glycero-3-phosphate + hexadecanoyl-CoA = 1,2-dihexadecanoyl-sn-glycero-3-phosphate + CoA. The enzyme catalyses 1-hexadecanoyl-sn-glycero-3-phosphate + tetradecanoyl-CoA = 1-hexadecanoyl-2-tetradecanoyl-sn-glycero-3-phosphate + CoA. It catalyses the reaction (11Z)-octadecenoyl-CoA + 1-(9Z-octadecenoyl)-sn-glycero-3-phosphate = 1-(9Z)-octadecenoyl-2-(11Z)-octadecenoyl-sn-glycero-3-phosphate + CoA. The protein operates within phospholipid metabolism; CDP-diacylglycerol biosynthesis; CDP-diacylglycerol from sn-glycerol 3-phosphate: step 2/3. In terms of biological role, converts 1-acyl-sn-glycerol-3-phosphate (lysophosphatidic acid or LPA) into 1,2-diacyl-sn-glycerol-3-phosphate (phosphatidic acid or PA) by incorporating an acyl moiety at the sn-2 position of the glycerol backbone. The polypeptide is 1-acyl-sn-glycerol-3-phosphate acyltransferase beta (Agpat2) (Mus musculus (Mouse)).